The following is a 105-amino-acid chain: Large ribosomal subunit protein bL21 (105 aa).

The protein belongs to the bacterial ribosomal protein bL21 family. Part of the 50S ribosomal subunit. Contacts protein L20.

In terms of biological role, this protein binds to 23S rRNA in the presence of protein L20. The polypeptide is Large ribosomal subunit protein bL21 (Desulfatibacillum aliphaticivorans).